The sequence spans 306 residues: Ribosomal protein L11 methyltransferase (306 aa).

S-adenosyl-L-methionine is bound by residues Thr-152, Gly-179, Asp-201, and Asn-243.

This sequence belongs to the methyltransferase superfamily. PrmA family.

The protein resides in the cytoplasm. The catalysed reaction is L-lysyl-[protein] + 3 S-adenosyl-L-methionine = N(6),N(6),N(6)-trimethyl-L-lysyl-[protein] + 3 S-adenosyl-L-homocysteine + 3 H(+). Methylates ribosomal protein L11. This chain is Ribosomal protein L11 methyltransferase, found in Citrifermentans bemidjiense (strain ATCC BAA-1014 / DSM 16622 / JCM 12645 / Bem) (Geobacter bemidjiensis).